The sequence spans 242 residues: Biosynthetic peptidoglycan transglycosylase (242 aa).

A helical transmembrane segment spans residues 19 to 39; that stretch reads ILAALAVFWGGGIALFSVVPV.

This sequence belongs to the glycosyltransferase 51 family.

It is found in the cell inner membrane. The enzyme catalyses [GlcNAc-(1-&gt;4)-Mur2Ac(oyl-L-Ala-gamma-D-Glu-L-Lys-D-Ala-D-Ala)](n)-di-trans,octa-cis-undecaprenyl diphosphate + beta-D-GlcNAc-(1-&gt;4)-Mur2Ac(oyl-L-Ala-gamma-D-Glu-L-Lys-D-Ala-D-Ala)-di-trans,octa-cis-undecaprenyl diphosphate = [GlcNAc-(1-&gt;4)-Mur2Ac(oyl-L-Ala-gamma-D-Glu-L-Lys-D-Ala-D-Ala)](n+1)-di-trans,octa-cis-undecaprenyl diphosphate + di-trans,octa-cis-undecaprenyl diphosphate + H(+). It functions in the pathway cell wall biogenesis; peptidoglycan biosynthesis. Functionally, peptidoglycan polymerase that catalyzes glycan chain elongation from lipid-linked precursors. The protein is Biosynthetic peptidoglycan transglycosylase of Salmonella choleraesuis (strain SC-B67).